The primary structure comprises 237 residues: Coat protein (237 aa).

The disordered stretch occupies residues 1 to 24; the sequence is MSAPASTTQATGSTTSTTTKTAGA.

It belongs to the potexvirus capsid protein family.

It localises to the virion. Required for genome encapsidation. Forms ribonucleoprotein complexes along with TGB1 helicase and viral RNA. The chain is Coat protein from Brassica campestris (Field mustard).